Reading from the N-terminus, the 917-residue chain is Isoleucine--tRNA ligase (917 aa).

The short motif at 57–67 (PYANGNLHMGH) is the 'HIGH' region element. Residue Glu-554 participates in L-isoleucyl-5'-AMP binding. The 'KMSKS' region motif lies at 595–599 (KMSKS). Lys-598 provides a ligand contact to ATP. The Zn(2+) site is built by Cys-886, Cys-889, Cys-906, and Cys-909.

It belongs to the class-I aminoacyl-tRNA synthetase family. IleS type 1 subfamily. In terms of assembly, monomer. The cofactor is Zn(2+).

Its subcellular location is the cytoplasm. The enzyme catalyses tRNA(Ile) + L-isoleucine + ATP = L-isoleucyl-tRNA(Ile) + AMP + diphosphate. In terms of biological role, catalyzes the attachment of isoleucine to tRNA(Ile). As IleRS can inadvertently accommodate and process structurally similar amino acids such as valine, to avoid such errors it has two additional distinct tRNA(Ile)-dependent editing activities. One activity is designated as 'pretransfer' editing and involves the hydrolysis of activated Val-AMP. The other activity is designated 'posttransfer' editing and involves deacylation of mischarged Val-tRNA(Ile). The chain is Isoleucine--tRNA ligase from Staphylococcus aureus (strain Mu3 / ATCC 700698).